The primary structure comprises 123 residues: Small ribosomal subunit protein uS12 (123 aa).

Asp89 carries the post-translational modification 3-methylthioaspartic acid. The segment at 103 to 123 is disordered; the sequence is DTSGVQDRRQGRSKYGAKRPK. Over residues 113 to 123 the composition is skewed to basic residues; the sequence is GRSKYGAKRPK.

The protein belongs to the universal ribosomal protein uS12 family. As to quaternary structure, part of the 30S ribosomal subunit. Contacts proteins S8 and S17. May interact with IF1 in the 30S initiation complex.

In terms of biological role, with S4 and S5 plays an important role in translational accuracy. Functionally, interacts with and stabilizes bases of the 16S rRNA that are involved in tRNA selection in the A site and with the mRNA backbone. Located at the interface of the 30S and 50S subunits, it traverses the body of the 30S subunit contacting proteins on the other side and probably holding the rRNA structure together. The combined cluster of proteins S8, S12 and S17 appears to hold together the shoulder and platform of the 30S subunit. This chain is Small ribosomal subunit protein uS12, found in Nitratidesulfovibrio vulgaris (strain ATCC 29579 / DSM 644 / CCUG 34227 / NCIMB 8303 / VKM B-1760 / Hildenborough) (Desulfovibrio vulgaris).